The sequence spans 78 residues: Small ribosomal subunit protein bS18 (78 aa).

This sequence belongs to the bacterial ribosomal protein bS18 family. Part of the 30S ribosomal subunit. Forms a tight heterodimer with protein bS6.

Functionally, binds as a heterodimer with protein bS6 to the central domain of the 16S rRNA, where it helps stabilize the platform of the 30S subunit. The protein is Small ribosomal subunit protein bS18 of Pediococcus pentosaceus (strain ATCC 25745 / CCUG 21536 / LMG 10740 / 183-1w).